The primary structure comprises 317 residues: Melanocyte-stimulating hormone receptor (317 aa).

The Extracellular portion of the chain corresponds to 1 to 37 (MPVQGSQRRLLGSLNSTPTATPRLGLAANQTGARCLE). Residue Asn29 is glycosylated (N-linked (GlcNAc...) asparagine). The chain crosses the membrane as a helical span at residues 38-63 (VSIPDGLFLSLGLVSLVENVLVVVAI). The Cytoplasmic segment spans residues 64–72 (ARNRNLHSP). The chain crosses the membrane as a helical span at residues 73–93 (MYCFICCLALSDLLVSGSNML). Residues 94–118 (ETAVILLLEAGALAARAAVVQQLDN) are Extracellular-facing. A helical membrane pass occupies residues 119–140 (VIDVITCSSMLSSLCFLGAIAV). Over 141–163 (DRYISIFYALRYHSIVTLRRARR) the chain is Cytoplasmic. The chain crosses the membrane as a helical span at residues 164–183 (VVAAIWVASVLFSTLFIAYC). The Extracellular portion of the chain corresponds to 184–191 (DHAAVLLS). Residues 192–211 (LVVFFLAMLVLMAVLYVHML) form a helical membrane-spanning segment. The Cytoplasmic segment spans residues 212-240 (ARACQHAQGIAQLHKRQRPAHQGVGLKGA). The chain crosses the membrane as a helical span at residues 241 to 266 (ATLTILLGIFFLCWGPFFLHLTLIVL). Topologically, residues 267 to 279 (CPQHPTCSCIFKN) are extracellular. Residues 280–300 (FNLFLTLIICNAIIDPLIYAF) traverse the membrane as a helical segment. Residues 301-317 (RSQELRRTLKKVLLCSW) lie on the Cytoplasmic side of the membrane. A lipid anchor (S-palmitoyl cysteine) is attached at Cys315.

It belongs to the G-protein coupled receptor 1 family. Interacts with MGRN1, but does not undergo MGRN1-mediated ubiquitination; this interaction competes with GNAS-binding and thus inhibits agonist-induced cAMP production. Interacts with OPN3; the interaction results in a decrease in MC1R-mediated cAMP signaling and ultimately a decrease in melanin production in melanocytes.

It localises to the cell membrane. In terms of biological role, receptor for MSH (alpha, beta and gamma) and ACTH. The activity of this receptor is mediated by G proteins which activate adenylate cyclase. Mediates melanogenesis, the production of eumelanin (black/brown) and phaeomelanin (red/yellow), via regulation of cAMP signaling in melanocytes. This chain is Melanocyte-stimulating hormone receptor (MC1R), found in Trachypithecus auratus (Javan langur).